The primary structure comprises 444 residues: MFSKLKKTWYADDFSYFIRNFGVFTLIFSTMTLIILQVMHSSLYTSVDDKLHGLSENPQAVIQLAINRATEEIKDLENARADASKVEIKPNVSSNTEVILFDKDFTQLLSGNRFLGLDKIKLEKKELGHIYQIQVFNSYGQEEIYRVILMETNISSVSTNIKYAAVLINTSQLEQASQKHEQLIVVVMASFWILSLLASLYLARVSVRPLLESMQKQQSFVENASHELRTPLAVLQNRLETLFRKPEATIMDVSESIASSLEEVRNMRFLTTSLLNLARRDDGIKPELAEVPTSFFNTTFTNYEMIASENNRVFRFENRIHRTIVTDQLLLKQLMTILFDNAVKYTEEDGEIDFLISATDRNLYLLVSDNGIGISTEDKKKIFDRFYRVDKARTRQKGGFGLGLSLAKQIVDALKGTVTVKDNKPKGTIFEVKIAIQTPSKKKK.

2 helical membrane passes run 21–41 (FGVF…VMHS) and 183–203 (LIVV…LYLA). Residues 223 to 438 (NASHELRTPL…IFEVKIAIQT (216 aa)) form the Histidine kinase domain. Phosphohistidine; by autocatalysis is present on His-226.

It localises to the cell membrane. The catalysed reaction is ATP + protein L-histidine = ADP + protein N-phospho-L-histidine.. Functionally, member of the two-component regulatory system CiaH/CiaR. Involved in early steps of competence regulation and in penicillin susceptibility. Probably phosphorylates CiaR. This Streptococcus pneumoniae serotype 4 (strain ATCC BAA-334 / TIGR4) protein is Sensor protein CiaH (ciaH).